Here is an 836-residue protein sequence, read N- to C-terminus: Probable RING finger protein 207 homolog (836 aa).

The RING-type zinc-finger motif lies at Cys8–Ser42. The B box-type 1; atypical zinc finger occupies Glu68–Ser115. Zn(2+)-binding residues include Cys73, Cys76, Cys97, and His102. Residues Tyr122 to Ile164 form a B box-type 2; degenerate zinc finger. Residues Gln527–Ala557 adopt a coiled-coil conformation. Positions Arg540–Leu552 are enriched in basic and acidic residues. The interval Arg540–Glu571 is disordered. Basic residues predominate over residues Ser561–Glu571.

In Caenorhabditis briggsae, this protein is Probable RING finger protein 207 homolog.